A 546-amino-acid polypeptide reads, in one-letter code: CTP synthase (546 aa).

An amidoligase domain region spans residues 1 to 265; sequence MTKYVFVTGG…DEIVCHKLNI (265 aa). Residue Ser13 coordinates CTP. Ser13 is a UTP binding site. ATP is bound by residues 14 to 19 and Asp71; that span reads SLGKGI. Mg(2+) is bound by residues Asp71 and Glu139. CTP-binding positions include 146–148, 186–191, and Lys222; these read DIE and KTKPTQ. UTP-binding positions include 186-191 and Lys222; that span reads KTKPTQ. In terms of domain architecture, Glutamine amidotransferase type-1 spans 290-543; it reads NIAFVGKYVD…VRAALAHQQK (254 aa). Residue Gly351 participates in L-glutamine binding. The active-site Nucleophile; for glutamine hydrolysis is Cys378. L-glutamine-binding positions include 379–382, Glu402, and Arg469; that span reads LGMQ. Catalysis depends on residues His516 and Glu518.

The protein belongs to the CTP synthase family. Homotetramer.

It carries out the reaction UTP + L-glutamine + ATP + H2O = CTP + L-glutamate + ADP + phosphate + 2 H(+). The catalysed reaction is L-glutamine + H2O = L-glutamate + NH4(+). The enzyme catalyses UTP + NH4(+) + ATP = CTP + ADP + phosphate + 2 H(+). It functions in the pathway pyrimidine metabolism; CTP biosynthesis via de novo pathway; CTP from UDP: step 2/2. Its activity is regulated as follows. Allosterically activated by GTP, when glutamine is the substrate; GTP has no effect on the reaction when ammonia is the substrate. The allosteric effector GTP functions by stabilizing the protein conformation that binds the tetrahedral intermediate(s) formed during glutamine hydrolysis. Inhibited by the product CTP, via allosteric rather than competitive inhibition. Functionally, catalyzes the ATP-dependent amination of UTP to CTP with either L-glutamine or ammonia as the source of nitrogen. Regulates intracellular CTP levels through interactions with the four ribonucleotide triphosphates. The sequence is that of CTP synthase from Thiobacillus denitrificans (strain ATCC 25259 / T1).